A 115-amino-acid polypeptide reads, in one-letter code: Large ribosomal subunit protein uL22 (115 aa).

This sequence belongs to the universal ribosomal protein uL22 family. Part of the 50S ribosomal subunit.

Functionally, this protein binds specifically to 23S rRNA; its binding is stimulated by other ribosomal proteins, e.g. L4, L17, and L20. It is important during the early stages of 50S assembly. It makes multiple contacts with different domains of the 23S rRNA in the assembled 50S subunit and ribosome. The globular domain of the protein is located near the polypeptide exit tunnel on the outside of the subunit, while an extended beta-hairpin is found that lines the wall of the exit tunnel in the center of the 70S ribosome. The sequence is that of Large ribosomal subunit protein uL22 from Thioalkalivibrio sulfidiphilus (strain HL-EbGR7).